Here is a 100-residue protein sequence, read N- to C-terminus: NADH-quinone oxidoreductase subunit K 2 (100 aa).

A run of 3 helical transmembrane segments spans residues 4-24, 28-48, and 60-80; these read LWWS…GVLL, ILIV…NFIA, and IFAI…LGIL.

The protein belongs to the complex I subunit 4L family. As to quaternary structure, NDH-1 is composed of 14 different subunits. Subunits NuoA, H, J, K, L, M, N constitute the membrane sector of the complex.

The protein resides in the cell inner membrane. The catalysed reaction is a quinone + NADH + 5 H(+)(in) = a quinol + NAD(+) + 4 H(+)(out). Its function is as follows. NDH-1 shuttles electrons from NADH, via FMN and iron-sulfur (Fe-S) centers, to quinones in the respiratory chain. The immediate electron acceptor for the enzyme in this species is believed to be ubiquinone. Couples the redox reaction to proton translocation (for every two electrons transferred, four hydrogen ions are translocated across the cytoplasmic membrane), and thus conserves the redox energy in a proton gradient. The polypeptide is NADH-quinone oxidoreductase subunit K 2 (Rhizobium meliloti (strain 1021) (Ensifer meliloti)).